The primary structure comprises 855 residues: Mitofusin FZO1 (855 aa).

The segment covering 1 to 19 (MSEGKQQFKDSNKPHKDST) has biased composition (basic and acidic residues). The disordered stretch occupies residues 1–27 (MSEGKQQFKDSNKPHKDSTDQDDDAAT). Topologically, residues 1–705 (MSEGKQQFKD…PSLLFTSKIP (705 aa)) are cytoplasmic. Residues 91 to 190 (NYNNNRVLLK…KRVDDVSSKV (100 aa)) form an HRN region. Residues 184–467 (DDVSSKVFIT…KKRSLSKLLP (284 aa)) form the Dynamin-type G domain. GTP-binding positions include 197–202 (NTGKSA) and 370–373 (KKFD). A Glycyl lysine isopeptide (Lys-Gly) (interchain with G-Cter in ubiquitin) cross-link involves residue Lys398. Residue Ser408 participates in GTP binding. Over residues 413–433 (ELPHYHNENDNEDHGDRKPDD) the composition is skewed to basic and acidic residues. The segment at 413 to 447 (ELPHYHNENDNEDHGDRKPDDDPYSSSDPDPDFDS) is disordered. Residue Lys464 forms a Glycyl lysine isopeptide (Lys-Gly) (interchain with G-Cter in ubiquitin) linkage. The HR1 stretch occupies residues 484–547 (KSNMKMYSEE…KEALLNALDV (64 aa)). Positions 630-843 (GKRLKVSLSI…QSLYEGTVAQ (214 aa)) are required for interaction with UGO1. A helical transmembrane segment spans residues 706 to 726 (TLTLYFLGSTKVVGNIILNGI). At 727 to 736 (KLSSWSSLKK) the chain is on the mitochondrial intermembrane side. A helical transmembrane segment spans residues 737–757 (LSVPVIVVGSLLGLTYLIHDL). At 758–855 (PRALPMNLSI…MVEEINLDID (98 aa)) the chain is on the cytoplasmic side. Residues 769–831 (YKRKLQELDY…KKESNLLSIK (63 aa)) are HR2. Residues 798–825 (TREILRSCEIIMDKKQITKKELENKKES) adopt a coiled-coil conformation.

This sequence belongs to the TRAFAC class dynamin-like GTPase superfamily. Dynamin/Fzo/YdjA family. Mitofusin subfamily. In terms of assembly, homodimer. Dimerization depends on GTP binding. Component of a large multiprotein complex of 800 kDa. Binds the cytoplasmic domain of UGO1 which binds MGM1 through its intermembrane space domain. Interacts with MDM30. Interacts with UBP2 and UBP12. Interacts (when ubiquitinated) with DOA1; the interaction recruits FZO1 to CDC48 and promotes FZO1 proteasomal degradation. Post-translationally, ubiquitinated at Lys-398 and Lys-464. MDM30 and UGO1 are involved in ubiquitination. Deubiquitinated by UBP2 and UBP12. UBP2 and UBP12 recognize distinct ubiquitin chains on FZO1 that have opposing effects on mitochondrial fusion. UBP2 removes ubiquitin chains that initiate proteolysis of FZO1 and inhibit fusion. UBP12 recognizes ubiquitin chains that stabilize FZO1 and promote mitochondrial fusion. UBP12 deubiquitylates FZO1 only after oligomerization.

It is found in the mitochondrion outer membrane. It catalyses the reaction GTP + H2O = GDP + phosphate + H(+). Essential transmembrane GTPase, which mediates mitochondrial fusion. Fusion proceeds through several steps; first mitochondria are tethered together, then brought into close contact, followed by the formation of a docking ring around contact areas, and finally membrane fusion. Fusion of mitochondria occurs in many cell types and constitutes an important step in mitochondrial morphology, which is balanced between fusion and fission, mediated by FZO1 and DNM1, respectively. Functions antagonistically with DNM1. Probably acts by forming membrane contact sites that mediate mitochondrial membrane fusion. Mitochondrial docking and fusion requires GTP hydrolysis. Mitochondrial fusion also promotes increased lifespan. The polypeptide is Mitofusin FZO1 (FZO1) (Saccharomyces cerevisiae (strain ATCC 204508 / S288c) (Baker's yeast)).